The chain runs to 135 residues: Flagellar assembly factor FliW 1 (135 aa).

The protein belongs to the FliW family. Interacts with translational regulator CsrA and flagellin(s).

Its subcellular location is the cytoplasm. Functionally, acts as an anti-CsrA protein, binds CsrA and prevents it from repressing translation of its target genes, one of which is flagellin. Binds to flagellin and participates in the assembly of the flagellum. This chain is Flagellar assembly factor FliW 1, found in Helicobacter pylori (strain ATCC 700392 / 26695) (Campylobacter pylori).